A 187-amino-acid polypeptide reads, in one-letter code: Cerebral dopamine neurotrophic factor (187 aa).

An N-terminal signal peptide occupies residues 1-24; the sequence is MRCTSPAALVTFCAGLWISNHVLA. Disulfide bonds link cysteine 37/cysteine 124, cysteine 40/cysteine 113, and cysteine 71/cysteine 82.

This sequence belongs to the ARMET family.

It is found in the secreted. Functionally, trophic factor for dopamine neurons. Prevents the 6-hydroxydopamine (6-OHDA)-induced degeneration of dopaminergic neurons. When administered after 6-OHDA-lesioning, restores the dopaminergic function and prevents the degeneration of dopaminergic neurons in substantia nigra. In Rattus norvegicus (Rat), this protein is Cerebral dopamine neurotrophic factor (Cdnf).